A 129-amino-acid polypeptide reads, in one-letter code: Small ribosomal subunit protein uS11 (129 aa).

It belongs to the universal ribosomal protein uS11 family. As to quaternary structure, part of the 30S ribosomal subunit. Interacts with proteins S7 and S18. Binds to IF-3.

In terms of biological role, located on the platform of the 30S subunit, it bridges several disparate RNA helices of the 16S rRNA. Forms part of the Shine-Dalgarno cleft in the 70S ribosome. This is Small ribosomal subunit protein uS11 from Bacillus cereus (strain ATCC 14579 / DSM 31 / CCUG 7414 / JCM 2152 / NBRC 15305 / NCIMB 9373 / NCTC 2599 / NRRL B-3711).